Consider the following 1102-residue polypeptide: ATP-dependent DNA helicase MPH1 (1102 aa).

The segment at 19-55 is disordered; that stretch reads ALDKPATSGLHSREQEQQRDISNATPHTSTDLELEDF. Over residues 38-49 the composition is skewed to polar residues; that stretch reads DISNATPHTSTD. Residues 147–315 form the Helicase ATP-binding domain; that stretch reads IVKNGLFNNT…DVIDNLGVSH (169 aa). ATP is bound at residue 160–167; that stretch reads LPTGLGKT. A DEAH box motif is present at residues 263–266; it reads DEAH. The Helicase C-terminal domain maps to 490 to 651; it reads NLLNYFMDAG…GSRFNFRHDL (162 aa). 4 disordered regions span residues 672-702, 720-743, 818-837, and 858-1102; these read PIEN…FNMP, ASKT…DEIS, SQGI…KSRY, and SGRK…SESG. The span at 687-699 shows a compositional bias: basic residues; the sequence is RSTRGKKASKKKF. A compositionally biased stretch (basic and acidic residues) spans 822-837; that stretch reads ETRHTKPHGDTDKSRY. Residues 1003-1019 show a composition bias toward low complexity; that stretch reads SSGAASKSGSTASTAAK. A compositionally biased stretch (acidic residues) spans 1069–1082; the sequence is SDDDDDDNDDEDDV.

The protein belongs to the DEAD box helicase family. DEAH subfamily. FANCM sub-subfamily. As to quaternary structure, interacts with the MHF histone-fold complex to form the FANCM-MHF complex.

The protein localises to the nucleus. The catalysed reaction is ATP + H2O = ADP + phosphate + H(+). Functionally, ATP-dependent DNA helicase involved in DNA damage repair by homologous recombination and in genome maintenance. Capable of unwinding D-loops. Plays a role in limiting crossover recombinants during mitotic DNA double-strand break (DSB) repair. Component of a FANCM-MHF complex which promotes gene conversion at blocked replication forks, probably by reversal of the stalled fork. The sequence is that of ATP-dependent DNA helicase MPH1 from Pyricularia oryzae (strain 70-15 / ATCC MYA-4617 / FGSC 8958) (Rice blast fungus).